Reading from the N-terminus, the 130-residue chain is Small ribosomal subunit protein uS11 (130 aa).

Belongs to the universal ribosomal protein uS11 family. Part of the 30S ribosomal subunit. Interacts with proteins S7 and S18. Binds to IF-3.

In terms of biological role, located on the platform of the 30S subunit, it bridges several disparate RNA helices of the 16S rRNA. Forms part of the Shine-Dalgarno cleft in the 70S ribosome. In Thermotoga petrophila (strain ATCC BAA-488 / DSM 13995 / JCM 10881 / RKU-1), this protein is Small ribosomal subunit protein uS11.